The chain runs to 2894 residues: uncharacterized protein (2894 aa).

The helical transmembrane segment at 8–28 (ISIFVFTILLLSNVSLGLNVS) threads the bilayer. PbH1 repeat units lie at residues 543–567 (EVRWYIENNTLYFYDDPIYGYDISL), 2085–2107 (NYPLYIDNLTINASGGYGISMLN), 2135–2156 (FGNITIYNITISSCNQGLVLYK), 2158–2180 (GNGIKLINSQIKNSVYEGVYSKN), 2201–2223 (ISSILVNNSLIYKNRYEGLLLEN), 2224–2244 (SSSSILNSNIMNNSIGIYLKE), 2245–2266 (NYISKIQKSNISYNAYGIEIVN), 2267–2289 (SSNVYINSSNIFNASTDGIAIFN), 2290–2311 (GENVSVENSLLYNNNYSILSYG), 2341–2363 (LNNLKLYNSSVLNSGSYGLFIYS), 2367–2389 (ASNVNISKSLINGSYKDGIYIYG), 2390–2419 (VNAINIVNNNITNNGLIGGDPAGSGIKISG), 2422–2444 (TKGVLILNNNISHNLGNGISLEG), 2455–2477 (VENNIISNNGIEENSGNGIYIGG), 2479–2501 (VENVSIFNNTIQYSDAQAILIQE), 2512–2542 (GTNISIINNTIQYNGLTVTIGNITAGITVGA), 2550–2582 (NGYIIIEGNKIINNNLCPNPTYGGKVGGIEVYG), 2589–2611 (SLEFNISKNIIANNSAYGILIGA), 2612–2633 (SKDINIINNTIFNNEKGITIPN), and 2638–2660 (PYNIIISKNSIYNNSLLGIDLDD).

It localises to the membrane. This is an uncharacterized protein from Methanocaldococcus jannaschii (strain ATCC 43067 / DSM 2661 / JAL-1 / JCM 10045 / NBRC 100440) (Methanococcus jannaschii).